The primary structure comprises 472 residues: GTPase HflX (472 aa).

The disordered stretch occupies residues 1–21 (MDTIDTPGEQGSQSFGNSLGA). The Hflx-type G domain maps to 230–396 (PTFALIGYTN…LMTEIIQEKS (167 aa)). Residues 236–243 (GYTNSGKS), 261–265 (FATLD), 283–286 (DTVG), 349–352 (NKVD), and 374–376 (SAK) contribute to the GTP site. Residues Ser-243 and Thr-263 each coordinate Mg(2+).

The protein belongs to the TRAFAC class OBG-HflX-like GTPase superfamily. HflX GTPase family. Monomer. Associates with the 50S ribosomal subunit. It depends on Mg(2+) as a cofactor.

It is found in the cytoplasm. GTPase that associates with the 50S ribosomal subunit and may have a role during protein synthesis or ribosome biogenesis. Specific for GTP. The polypeptide is GTPase HflX (Chlamydia pneumoniae (Chlamydophila pneumoniae)).